The primary structure comprises 126 residues: Anti-adapter protein IraD (126 aa).

The protein belongs to the GpW/Gp25 family. IraD subfamily. Interacts with RssB.

It localises to the cytoplasm. Inhibits RpoS proteolysis by regulating RssB activity, thereby increasing the stability of the sigma stress factor RpoS during oxidative stress. Its effect on RpoS stability is due to its interaction with RssB, which probably blocks the interaction of RssB with RpoS, and the consequent delivery of the RssB-RpoS complex to the ClpXP protein degradation pathway. The polypeptide is Anti-adapter protein IraD (Salmonella arizonae (strain ATCC BAA-731 / CDC346-86 / RSK2980)).